An 88-amino-acid chain; its full sequence is Small ribosomal subunit protein uS15 (88 aa).

It belongs to the universal ribosomal protein uS15 family. As to quaternary structure, part of the 30S ribosomal subunit. Forms a bridge to the 50S subunit in the 70S ribosome, contacting the 23S rRNA.

Its function is as follows. One of the primary rRNA binding proteins, it binds directly to 16S rRNA where it helps nucleate assembly of the platform of the 30S subunit by binding and bridging several RNA helices of the 16S rRNA. Functionally, forms an intersubunit bridge (bridge B4) with the 23S rRNA of the 50S subunit in the ribosome. The protein is Small ribosomal subunit protein uS15 of Mycoplasmopsis pulmonis (strain UAB CTIP) (Mycoplasma pulmonis).